We begin with the raw amino-acid sequence, 396 residues long: Acetate kinase (396 aa).

Mg(2+) is bound at residue N8. Residue K15 participates in ATP binding. A substrate-binding site is contributed by R89. Catalysis depends on D146, which acts as the Proton donor/acceptor. Residues 206 to 210 (HIGNG), 283 to 285 (DMR), and 331 to 335 (GIGEN) each bind ATP. Position 383 (E383) interacts with Mg(2+).

It belongs to the acetokinase family. In terms of assembly, homodimer. Mg(2+) serves as cofactor. Requires Mn(2+) as cofactor.

Its subcellular location is the cytoplasm. The catalysed reaction is acetate + ATP = acetyl phosphate + ADP. The protein operates within metabolic intermediate biosynthesis; acetyl-CoA biosynthesis; acetyl-CoA from acetate: step 1/2. Its function is as follows. Catalyzes the formation of acetyl phosphate from acetate and ATP. Can also catalyze the reverse reaction. The chain is Acetate kinase from Streptococcus gordonii (strain Challis / ATCC 35105 / BCRC 15272 / CH1 / DL1 / V288).